The primary structure comprises 97 residues: Putative CC-type chemokine U83 (97 aa).

Intrachain disulfides connect cysteine 32–cysteine 62 and cysteine 33–cysteine 76.

It belongs to the intercrine beta (chemokine CC) family. Highly divergent.

In Homo sapiens (Human), this protein is Putative CC-type chemokine U83 (U83).